The chain runs to 90 residues: MSQICVKASVKGIVQGVGFRFHTAHEGLQGGLSGYAMNLPDGSVEVLACGSEANVNKLLAWLESGPKTSRVDNIDAEIIEWRHIDGFEIK.

In terms of domain architecture, Acylphosphatase-like spans 5–90 (CVKASVKGIV…WRHIDGFEIK (86 aa)). Residues Arg-20 and Asn-38 contribute to the active site.

Belongs to the acylphosphatase family.

It catalyses the reaction an acyl phosphate + H2O = a carboxylate + phosphate + H(+). In Photobacterium profundum (strain SS9), this protein is Acylphosphatase (acyP).